We begin with the raw amino-acid sequence, 632 residues long: tRNA uridine 5-carboxymethylaminomethyl modification enzyme MnmG (632 aa).

FAD-binding positions include 15 to 20 (GAGHAG), I127, and S182. 276–290 (GPRYCPSIEDKIVRF) is an NAD(+) binding site. Residue Q373 coordinates FAD.

The protein belongs to the MnmG family. As to quaternary structure, homodimer. Heterotetramer of two MnmE and two MnmG subunits. The cofactor is FAD.

It is found in the cytoplasm. NAD-binding protein involved in the addition of a carboxymethylaminomethyl (cmnm) group at the wobble position (U34) of certain tRNAs, forming tRNA-cmnm(5)s(2)U34. The polypeptide is tRNA uridine 5-carboxymethylaminomethyl modification enzyme MnmG (Streptococcus pyogenes serotype M18 (strain MGAS8232)).